The sequence spans 135 residues: uncharacterized protein (135 aa).

Residues 1-70 (MKPDWPRRGA…RWRPQGTGTG (70 aa)) form a disordered region.

This is an uncharacterized protein from Homo sapiens (Human).